The sequence spans 154 residues: MSKKFIITWDAMQTYCRELAEKQMPAEQWKGIWAVSRGGLVPGAILARELGIRYVDTICISSYDHDHQRDMTVLKAPEGDGEGYLIVEDLVDSGDTARKLREMYPKAKMIAVCAKPSGKELLDDYVVDIAQDTWIEQPWDMSIQYAEPVNRKQK.

5-phospho-alpha-D-ribose 1-diphosphate contacts are provided by residues 37–38 (RG), Arg-69, and 88–96 (EDLVDSGDT). Arg-69 serves as a coordination point for GMP. Asp-89 is a Mg(2+) binding site. 2 residues coordinate guanine: Asp-92 and Ile-135. The xanthine site is built by Asp-92 and Ile-135. GMP-binding positions include 92–96 (DSGDT) and 134–135 (WI).

Belongs to the purine/pyrimidine phosphoribosyltransferase family. XGPT subfamily. As to quaternary structure, homotetramer. It depends on Mg(2+) as a cofactor.

The protein resides in the cell inner membrane. The catalysed reaction is GMP + diphosphate = guanine + 5-phospho-alpha-D-ribose 1-diphosphate. It carries out the reaction XMP + diphosphate = xanthine + 5-phospho-alpha-D-ribose 1-diphosphate. The enzyme catalyses IMP + diphosphate = hypoxanthine + 5-phospho-alpha-D-ribose 1-diphosphate. The protein operates within purine metabolism; GMP biosynthesis via salvage pathway; GMP from guanine: step 1/1. Its pathway is purine metabolism; XMP biosynthesis via salvage pathway; XMP from xanthine: step 1/1. Its function is as follows. Purine salvage pathway enzyme that catalyzes the transfer of the ribosyl-5-phosphate group from 5-phospho-alpha-D-ribose 1-diphosphate (PRPP) to the N9 position of the 6-oxopurines guanine and xanthine to form the corresponding ribonucleotides GMP (guanosine 5'-monophosphate) and XMP (xanthosine 5'-monophosphate), with the release of PPi. To a lesser extent, also acts on hypoxanthine. The polypeptide is Xanthine-guanine phosphoribosyltransferase (Vibrio parahaemolyticus serotype O3:K6 (strain RIMD 2210633)).